The sequence spans 131 residues: Probable lactoylglutathione lyase (131 aa).

Positions 2-126 (FLLHTMIRVG…DGYKIELIQT (125 aa)) constitute a VOC domain. H5 is a binding site for Ni(2+). Residue R9 participates in substrate binding. E56 serves as a coordination point for Ni(2+). Residues N60 and H74 each coordinate substrate. Ni(2+) contacts are provided by H74 and E122. The active-site Proton donor/acceptor is the E122.

The protein belongs to the glyoxalase I family. The cofactor is Ni(2+).

The enzyme catalyses (R)-S-lactoylglutathione = methylglyoxal + glutathione. It participates in secondary metabolite metabolism; methylglyoxal degradation; (R)-lactate from methylglyoxal: step 1/2. Its function is as follows. Catalyzes the conversion of hemimercaptal, formed from methylglyoxal and glutathione, to S-lactoylglutathione. The protein is Probable lactoylglutathione lyase (gloA) of Synechocystis sp. (strain ATCC 27184 / PCC 6803 / Kazusa).